A 258-amino-acid chain; its full sequence is Synapse differentiation-inducing gene protein 1-like (258 aa).

Over 1-182 (MESLSELQNP…FIVIPPRDHL (182 aa)) the chain is Extracellular. Residues 183–203 (GLAIFSMLCCFWPLGIAAFYF) form a helical membrane-spanning segment. The Cytoplasmic portion of the chain corresponds to 204–228 (SQGTSKAVTKGDFPLASIASRRALF). A helical transmembrane segment spans residues 229-249 (LAALSITIGTGVYVGVVVALI). Residues 250-258 (AYLSKPGHI) lie on the Extracellular side of the membrane.

The protein belongs to the CD225/Dispanin family.

Its subcellular location is the membrane. The protein localises to the golgi apparatus. It is found in the cis-Golgi network. This Danio rerio (Zebrafish) protein is Synapse differentiation-inducing gene protein 1-like (syndig1l).